We begin with the raw amino-acid sequence, 236 residues long: Ribose-5-phosphate isomerase (236 aa).

Substrate contacts are provided by residues 27-30 (TGST), 84-87 (DGTD), and 97-100 (KGRG). E106 functions as the Proton acceptor in the catalytic mechanism. K124 lines the substrate pocket.

It belongs to the ribose 5-phosphate isomerase family. Homodimer.

It catalyses the reaction aldehydo-D-ribose 5-phosphate = D-ribulose 5-phosphate. Its pathway is carbohydrate degradation; pentose phosphate pathway; D-ribose 5-phosphate from D-ribulose 5-phosphate (non-oxidative stage): step 1/1. Its function is as follows. Involved in the first step of the non-oxidative branch of the pentose phosphate pathway. It catalyzes the reversible conversion of ribose-5-phosphate to ribulose 5-phosphate. The protein is Ribose-5-phosphate isomerase of Plasmodium falciparum (isolate 3D7).